An 860-amino-acid polypeptide reads, in one-letter code: Spindle and centriole-associated protein 1 (860 aa).

Disordered regions lie at residues 160-200 (ESVI…SQSN), 232-254 (QSQM…QKAA), and 293-330 (KQLL…SSSN). Threonine 236 is modified (phosphothreonine). The span at 236-249 (TASSGTPSSASPSG) shows a compositional bias: low complexity. A compositionally biased stretch (polar residues) spans 308–330 (PSKQKSSMLSASTASTDLPSSSN). Positions 383 to 437 (RYLKESELQLRKEVETRQRLEEALGDHRELIDALTAEVLFLREENTATQARLQQY) form a coiled coil. Phosphoserine is present on serine 646. Residues 729 to 755 (SSMEERIAELNRQSMEARGKLLQLIEQ) are a coiled coil. Phosphoserine is present on residues serine 765, serine 769, and serine 824. The interval 790–860 (IPGAEAPESS…GWFALSTHVS (71 aa)) is disordered. Low complexity predominate over residues 808 to 824 (SGLNSRRSSGAASNSCS).

As to quaternary structure, interacts with CEP120.

The protein resides in the cytoplasm. The protein localises to the cytoskeleton. It is found in the microtubule organizing center. It localises to the centrosome. Its subcellular location is the centriole. The protein resides in the spindle. Its function is as follows. Regulator required for centriole duplication. for proper bipolar spindle formation and chromosome congression in mitosis. The chain is Spindle and centriole-associated protein 1 (SPICE1) from Bos taurus (Bovine).